A 972-amino-acid polypeptide reads, in one-letter code: UPF0746 protein DDB_G0280785 (972 aa).

The span at 1–19 shows a compositional bias: basic and acidic residues; sequence MISNKRKEIENINRHHEKD. The disordered stretch occupies residues 1-30; that stretch reads MISNKRKEIENINRHHEKDNDDDDSDGIDN. The SAP domain occupies 44-78; that stretch reads SGSTNYRELQIIAKSLGLASNGKKQLVYNRIEGYF.

It belongs to the UPF0746 family.

In Dictyostelium discoideum (Social amoeba), this protein is UPF0746 protein DDB_G0280785.